The sequence spans 228 residues: Cytidylate kinase (228 aa).

ATP is bound at residue 12 to 20 (GPSGSGKGT).

Belongs to the cytidylate kinase family. Type 1 subfamily.

The protein localises to the cytoplasm. The enzyme catalyses CMP + ATP = CDP + ADP. It carries out the reaction dCMP + ATP = dCDP + ADP. This is Cytidylate kinase from Pseudomonas putida (strain W619).